A 721-amino-acid chain; its full sequence is Procollagen-lysine,2-oxoglutarate 5-dioxygenase (721 aa).

Positions 1–21 (MRIQQSALLLLLLAVTSQGDA) are cleaved as a signal peptide. Residues asparagine 504, asparagine 530, and asparagine 536 are each glycosylated (N-linked (GlcNAc...) asparagine). One can recognise a Fe2OG dioxygenase domain in the interval 627–721 (NPPRALMNFM…RYIMISFIDP (95 aa)). Residues histidine 650 and aspartate 652 each contribute to the Fe cation site. A glycan (N-linked (GlcNAc...) asparagine) is linked at asparagine 680. Histidine 702 serves as a coordination point for Fe cation. A glycan (N-linked (GlcNAc...) asparagine) is linked at asparagine 709. Residue arginine 712 coordinates 2-oxoglutarate.

L-ascorbate is required as a cofactor. Requires Fe(2+) as cofactor.

It localises to the endoplasmic reticulum. It is found in the secreted. Its subcellular location is the extracellular space. It catalyses the reaction L-lysyl-[collagen] + 2-oxoglutarate + O2 = (5R)-5-hydroxy-L-lysyl-[collagen] + succinate + CO2. Functionally, forms hydroxylysine residues in collagen type IV. Required for the secretion of collagen type IV (vkg) from haemocytes, fat body and follicle cells. This is Procollagen-lysine,2-oxoglutarate 5-dioxygenase from Drosophila melanogaster (Fruit fly).